A 442-amino-acid chain; its full sequence is Chitinase-like protein Idgf4 (442 aa).

The signal sequence occupies residues 1–21 (MKLYALFSLLVGSLAIGQISA). The 418-residue stretch at 25–442 (HHLLCYYDGN…PILRQVKSKL (418 aa)) folds into the GH18 domain. An intrachain disulfide couples C29 to C56. An N-linked (GlcNAc...) asparagine glycan is attached at N224. A disulfide bond links C343 and C426.

This sequence belongs to the glycosyl hydrolase 18 family. IDGF subfamily. In terms of processing, glycosylated. As to expression, primarily expressed in yolk cells and fat body. In larvae, it is expressed in the imaginal ring, the salivary duct, large salivary gland cells and weakly expressed in imaginal disks. More strongly expressed than Idgf1 and Idgf3.

It is found in the secreted. In terms of biological role, cooperates with insulin-like peptides to stimulate the proliferation, polarization and motility of imaginal disk cells. May act by stabilizing the binding of insulin-like peptides to its receptor through a simultaneous interaction with both molecules to form a multiprotein signaling complex. The sequence is that of Chitinase-like protein Idgf4 (Idgf4) from Drosophila melanogaster (Fruit fly).